We begin with the raw amino-acid sequence, 466 residues long: Methylenetetrahydrofolate--tRNA-(uracil-5-)-methyltransferase TrmFO (466 aa).

14–19 (GGGLAG) is an FAD binding site.

It belongs to the MnmG family. TrmFO subfamily. The cofactor is FAD.

Its subcellular location is the cytoplasm. It carries out the reaction uridine(54) in tRNA + (6R)-5,10-methylene-5,6,7,8-tetrahydrofolate + NADH + H(+) = 5-methyluridine(54) in tRNA + (6S)-5,6,7,8-tetrahydrofolate + NAD(+). The catalysed reaction is uridine(54) in tRNA + (6R)-5,10-methylene-5,6,7,8-tetrahydrofolate + NADPH + H(+) = 5-methyluridine(54) in tRNA + (6S)-5,6,7,8-tetrahydrofolate + NADP(+). Catalyzes the folate-dependent formation of 5-methyl-uridine at position 54 (M-5-U54) in all tRNAs. This chain is Methylenetetrahydrofolate--tRNA-(uracil-5-)-methyltransferase TrmFO, found in Brucella abortus (strain 2308).